The sequence spans 304 residues: UDP-3-O-acyl-N-acetylglucosamine deacetylase (304 aa).

Zn(2+)-binding residues include histidine 78, histidine 237, and aspartate 241. The Proton donor role is filled by histidine 264.

Belongs to the LpxC family. Requires Zn(2+) as cofactor.

It carries out the reaction a UDP-3-O-[(3R)-3-hydroxyacyl]-N-acetyl-alpha-D-glucosamine + H2O = a UDP-3-O-[(3R)-3-hydroxyacyl]-alpha-D-glucosamine + acetate. It participates in glycolipid biosynthesis; lipid IV(A) biosynthesis; lipid IV(A) from (3R)-3-hydroxytetradecanoyl-[acyl-carrier-protein] and UDP-N-acetyl-alpha-D-glucosamine: step 2/6. In terms of biological role, catalyzes the hydrolysis of UDP-3-O-myristoyl-N-acetylglucosamine to form UDP-3-O-myristoylglucosamine and acetate, the committed step in lipid A biosynthesis. The protein is UDP-3-O-acyl-N-acetylglucosamine deacetylase of Xylella fastidiosa (strain 9a5c).